The sequence spans 401 residues: Steroid C26-monooxygenase (401 aa).

C343 contributes to the heme binding site.

This sequence belongs to the cytochrome P450 family. Heme is required as a cofactor.

The catalysed reaction is cholest-4-en-3-one + 6 reduced [2Fe-2S]-[ferredoxin] + 3 O2 + 5 H(+) = (25R)-3-oxocholest-4-en-26-oate + 6 oxidized [2Fe-2S]-[ferredoxin] + 4 H2O. It functions in the pathway steroid metabolism; cholesterol degradation. Involved in the utilization of cholesterol as the sole carbon and energy source by degrading the side chain. Primarily catalyzes the sequential oxidation of the terminal methyl of cholest-4-en-3-one into (25R)-26-hydroxycholest-4-en-3-one (alcohol), (25R)-26-oxocholest-4-en-3-one (aldehyde), to finally yield the carboxylic acid (25R)-3-oxocholest-4-en-26-oate. Also able to sequentially oxidize cholesterol itself, not only cholest-4-en-3-one. The sequence is that of Steroid C26-monooxygenase from Mycolicibacterium smegmatis (strain ATCC 700084 / mc(2)155) (Mycobacterium smegmatis).